Reading from the N-terminus, the 888-residue chain is Villin-like protein quail (888 aa).

The Gelsolin-like repeat unit spans residues 307–366; that stretch reads GVYLLDNYGQSIWLWVGGQAPQADALSAMGNGRAFVKKKKYPDNTLVVRVLEGHEPVEFK. Positions 823–888 constitute an HP domain; sequence FDGHKKYPLT…MELKKQFKLF (66 aa).

The protein belongs to the villin/gelsolin family. Germline specific in adult flies.

Functionally, required for the formation of cytoplasmic actin filament bundles in nurse cells, possibly by regulating both the polymerization and organization of actin filaments. Mutations in quail result in female sterility due to the disruption of cytoplasmic transport from the nurse cells into the oocyte late in oogenesis. The protein is Villin-like protein quail (qua) of Drosophila melanogaster (Fruit fly).